Reading from the N-terminus, the 268-residue chain is Tryptophan synthase alpha chain (268 aa).

Residues glutamate 49 and aspartate 60 each act as proton acceptor in the active site.

This sequence belongs to the TrpA family. As to quaternary structure, tetramer of two alpha and two beta chains.

The catalysed reaction is (1S,2R)-1-C-(indol-3-yl)glycerol 3-phosphate + L-serine = D-glyceraldehyde 3-phosphate + L-tryptophan + H2O. It functions in the pathway amino-acid biosynthesis; L-tryptophan biosynthesis; L-tryptophan from chorismate: step 5/5. The alpha subunit is responsible for the aldol cleavage of indoleglycerol phosphate to indole and glyceraldehyde 3-phosphate. The polypeptide is Tryptophan synthase alpha chain (Pectobacterium atrosepticum (strain SCRI 1043 / ATCC BAA-672) (Erwinia carotovora subsp. atroseptica)).